We begin with the raw amino-acid sequence, 873 residues long: Leucine--tRNA ligase (873 aa).

Positions 42 to 52 (PYPSGKLHMGH) match the 'HIGH' region motif. Positions 628–632 (KMSKS) match the 'KMSKS' region motif. K631 is an ATP binding site.

It belongs to the class-I aminoacyl-tRNA synthetase family.

The protein localises to the cytoplasm. It carries out the reaction tRNA(Leu) + L-leucine + ATP = L-leucyl-tRNA(Leu) + AMP + diphosphate. The chain is Leucine--tRNA ligase from Azoarcus sp. (strain BH72).